The chain runs to 328 residues: Phosphate acyltransferase (328 aa).

Belongs to the PlsX family. In terms of assembly, homodimer. Probably interacts with PlsY.

Its subcellular location is the cytoplasm. The enzyme catalyses a fatty acyl-[ACP] + phosphate = an acyl phosphate + holo-[ACP]. The protein operates within lipid metabolism; phospholipid metabolism. In terms of biological role, catalyzes the reversible formation of acyl-phosphate (acyl-PO(4)) from acyl-[acyl-carrier-protein] (acyl-ACP). This enzyme utilizes acyl-ACP as fatty acyl donor, but not acyl-CoA. The polypeptide is Phosphate acyltransferase (Mycoplasma pneumoniae (strain ATCC 29342 / M129 / Subtype 1) (Mycoplasmoides pneumoniae)).